The chain runs to 182 residues: Large ribosomal subunit protein uL5m (182 aa).

The protein belongs to the universal ribosomal protein uL5 family.

Its subcellular location is the mitochondrion. This chain is Large ribosomal subunit protein uL5m (RPL5), found in Reclinomonas americana.